A 596-amino-acid chain; its full sequence is Chaperone protein DnaK (596 aa).

Residue threonine 180 is modified to Phosphothreonine; by autocatalysis.

Belongs to the heat shock protein 70 family.

Its function is as follows. Acts as a chaperone. In Thermotoga neapolitana (strain ATCC 49049 / DSM 4359 / NBRC 107923 / NS-E), this protein is Chaperone protein DnaK.